Consider the following 450-residue polypeptide: 23S rRNA (uracil(1939)-C(5))-methyltransferase RlmD (450 aa).

The TRAM domain maps to Ser12 to Lys70. Residues Cys83, Cys89, Cys92, and Cys171 each contribute to the [4Fe-4S] cluster site. Gln283, Phe312, Asn317, Glu333, Asp360, and Asp380 together coordinate S-adenosyl-L-methionine. Catalysis depends on Cys406, which acts as the Nucleophile.

It belongs to the class I-like SAM-binding methyltransferase superfamily. RNA M5U methyltransferase family. RlmD subfamily.

It carries out the reaction uridine(1939) in 23S rRNA + S-adenosyl-L-methionine = 5-methyluridine(1939) in 23S rRNA + S-adenosyl-L-homocysteine + H(+). Its function is as follows. Catalyzes the formation of 5-methyl-uridine at position 1939 (m5U1939) in 23S rRNA. The polypeptide is 23S rRNA (uracil(1939)-C(5))-methyltransferase RlmD (Shewanella putrefaciens (strain CN-32 / ATCC BAA-453)).